The following is a 282-amino-acid chain: ATP synthase gamma chain (282 aa).

This sequence belongs to the ATPase gamma chain family. In terms of assembly, F-type ATPases have 2 components, CF(1) - the catalytic core - and CF(0) - the membrane proton channel. CF(1) has five subunits: alpha(3), beta(3), gamma(1), delta(1), epsilon(1). CF(0) has three main subunits: a, b and c.

It localises to the cell membrane. In terms of biological role, produces ATP from ADP in the presence of a proton gradient across the membrane. The gamma chain is believed to be important in regulating ATPase activity and the flow of protons through the CF(0) complex. The polypeptide is ATP synthase gamma chain (Clostridium botulinum (strain 657 / Type Ba4)).